The chain runs to 461 residues: Cysteine--tRNA ligase (461 aa).

Cysteine 28 is a Zn(2+) binding site. The 'HIGH' region motif lies at 30–40 (ITVYDLCHIGH). Residues cysteine 209, histidine 234, and glutamate 238 each coordinate Zn(2+). The 'KMSKS' region signature appears at 266–270 (KMSKS). Lysine 269 contributes to the ATP binding site.

Belongs to the class-I aminoacyl-tRNA synthetase family. As to quaternary structure, monomer. Requires Zn(2+) as cofactor.

Its subcellular location is the cytoplasm. The catalysed reaction is tRNA(Cys) + L-cysteine + ATP = L-cysteinyl-tRNA(Cys) + AMP + diphosphate. This chain is Cysteine--tRNA ligase, found in Escherichia coli O6:K15:H31 (strain 536 / UPEC).